Consider the following 399-residue polypeptide: Zinc finger TRAF-type-containing protein 1 (399 aa).

Residues 1-13 (MSGAEEAGGGGPA) are compositionally biased toward gly residues. The disordered stretch occupies residues 1-21 (MSGAEEAGGGGPAAGPAGAVP). An RING-type; degenerate zinc finger spans residues 106–151 (CTVCLDLPKASVYQCTNGHLMCAGCFIHLLADARLKEEQATCPNCR). The TRAF-type zinc finger occupies 152–210 (CEISKSLCCRNLAVEKAVSELPSECGFCLRQFPRSLLERHQKEECQDRVTQCKYKRIGC).

Belongs to the ZFTRAF1 family. As to quaternary structure, interacts with LGALS3. Expressed in heart, brain, liver, testis and kidney.

Its subcellular location is the cytoplasm. The protein resides in the perinuclear region. The chain is Zinc finger TRAF-type-containing protein 1 from Mus musculus (Mouse).